Reading from the N-terminus, the 213-residue chain is Nucleolar protein 12 (213 aa).

Residues 33 to 96 adopt a coiled-coil conformation; the sequence is GFHKRKVERK…RLVTAKTESV (64 aa). A disordered region spans residues 109–213; sequence TISDLDLSGA…LTGKAQHSRE (105 aa). Residues 130 to 139 are compositionally biased toward acidic residues; that stretch reads AGDESEEEAS. The span at 170 to 182 shows a compositional bias: basic residues; the sequence is AHSRKKVKRKHPR.

The protein belongs to the RRP17 family. In terms of assembly, interacts with KIAA1191.

The protein resides in the nucleus. Its subcellular location is the nucleolus. It localises to the cytoplasm. Its function is as follows. Multifunctional RNA binding protein that plays a role in RNA metabolism and DNA maintenance. Participates in the resolution of DNA stress and the maintenance of genome integrity by localizing to sites of DNA insults. Also plays a role in proper nucleolar organization by limiting nucleolar size and regulating nucleolar number. Mechanistically, regulates the nucleolar levels of fibrillarin and nucleolin, two key players in pre-rRNA processing and ribosome assembly. This chain is Nucleolar protein 12 (NOL12), found in Pongo abelii (Sumatran orangutan).